The primary structure comprises 345 residues: Tropomodulin-4 (345 aa).

Residues 42 to 63 form a disordered region; that stretch reads NMLLPAGLRQRDQTKKSPTGPL.

The protein belongs to the tropomodulin family. Binds to the N-terminus of tropomyosin and to actin.

The protein resides in the cytoplasm. It localises to the cytoskeleton. Its function is as follows. Blocks the elongation and depolymerization of the actin filaments at the pointed end. The Tmod/TM complex contributes to the formation of the short actin protofilament, which in turn defines the geometry of the membrane skeleton. The polypeptide is Tropomodulin-4 (TMOD4) (Bos taurus (Bovine)).